The sequence spans 325 residues: 4-hydroxy-3-methylbut-2-enyl diphosphate reductase (325 aa).

Position 13 (C13) interacts with [4Fe-4S] cluster. Residues H42 and H76 each contribute to the (2E)-4-hydroxy-3-methylbut-2-enyl diphosphate site. Dimethylallyl diphosphate-binding residues include H42 and H76. Isopentenyl diphosphate is bound by residues H42 and H76. C98 contacts [4Fe-4S] cluster. Position 126 (H126) interacts with (2E)-4-hydroxy-3-methylbut-2-enyl diphosphate. H126 is a binding site for dimethylallyl diphosphate. H126 is an isopentenyl diphosphate binding site. E128 (proton donor) is an active-site residue. T169 provides a ligand contact to (2E)-4-hydroxy-3-methylbut-2-enyl diphosphate. Residue C230 coordinates [4Fe-4S] cluster. (2E)-4-hydroxy-3-methylbut-2-enyl diphosphate-binding residues include S258, S259, N260, and S306. Dimethylallyl diphosphate-binding residues include S258, S259, N260, and S306. Isopentenyl diphosphate is bound by residues S258, S259, N260, and S306.

Belongs to the IspH family. [4Fe-4S] cluster serves as cofactor.

The enzyme catalyses isopentenyl diphosphate + 2 oxidized [2Fe-2S]-[ferredoxin] + H2O = (2E)-4-hydroxy-3-methylbut-2-enyl diphosphate + 2 reduced [2Fe-2S]-[ferredoxin] + 2 H(+). It catalyses the reaction dimethylallyl diphosphate + 2 oxidized [2Fe-2S]-[ferredoxin] + H2O = (2E)-4-hydroxy-3-methylbut-2-enyl diphosphate + 2 reduced [2Fe-2S]-[ferredoxin] + 2 H(+). The protein operates within isoprenoid biosynthesis; dimethylallyl diphosphate biosynthesis; dimethylallyl diphosphate from (2E)-4-hydroxy-3-methylbutenyl diphosphate: step 1/1. It participates in isoprenoid biosynthesis; isopentenyl diphosphate biosynthesis via DXP pathway; isopentenyl diphosphate from 1-deoxy-D-xylulose 5-phosphate: step 6/6. Catalyzes the conversion of 1-hydroxy-2-methyl-2-(E)-butenyl 4-diphosphate (HMBPP) into a mixture of isopentenyl diphosphate (IPP) and dimethylallyl diphosphate (DMAPP). Acts in the terminal step of the DOXP/MEP pathway for isoprenoid precursor biosynthesis. This chain is 4-hydroxy-3-methylbut-2-enyl diphosphate reductase, found in Prosthecochloris aestuarii (strain DSM 271 / SK 413).